A 134-amino-acid polypeptide reads, in one-letter code: MIEMLKTLPPTLREKKRYIAFKILYDEELKEGEVVNLIRKAVLEYYGSWGTSKANPWLVYYDFPYGILRCQRDNVDYVKASLILIREFKEKPVNIICLGVSGTIRKAKIKFLGIKKPKRWFVIRRERLKAKKQK.

The protein belongs to the eukaryotic/archaeal RNase P protein component 2 family. As to quaternary structure, consists of a catalytic RNA component and at least 4-5 protein subunits. Forms a subcomplex with Rnp3 which stimulates the catalytic RNA.

It is found in the cytoplasm. The catalysed reaction is Endonucleolytic cleavage of RNA, removing 5'-extranucleotides from tRNA precursor.. Its function is as follows. Part of ribonuclease P, a protein complex that generates mature tRNA molecules by cleaving their 5'-ends. The chain is Ribonuclease P protein component 2 from Methanocaldococcus jannaschii (strain ATCC 43067 / DSM 2661 / JAL-1 / JCM 10045 / NBRC 100440) (Methanococcus jannaschii).